The chain runs to 476 residues: Cardiolipin synthase (476 aa).

2 helical membrane-spanning segments follow: residues 2–22 and 31–51; these read HLFINMIFLINIVFIISIIFI and WAWILILTFLPILGFIIYILF. PLD phosphodiesterase domains are found at residues 207-234 and 389-416; these read INYRNHRKILIIDSKVAFLGGFNIGDEY and EKGFLHAKTIVADSSICSVGTANMDIRS. Catalysis depends on residues H212, K214, D219, H394, K396, and D401.

It belongs to the phospholipase D family. Cardiolipin synthase subfamily.

It is found in the cell membrane. It catalyses the reaction 2 a 1,2-diacyl-sn-glycero-3-phospho-(1'-sn-glycerol) = a cardiolipin + glycerol. Catalyzes the reversible phosphatidyl group transfer from one phosphatidylglycerol molecule to another to form cardiolipin (CL) (diphosphatidylglycerol) and glycerol. The protein is Cardiolipin synthase (cls) of Clostridium perfringens (strain ATCC 13124 / DSM 756 / JCM 1290 / NCIMB 6125 / NCTC 8237 / Type A).